A 270-amino-acid polypeptide reads, in one-letter code: Indole-3-glycerol phosphate synthase (270 aa).

It belongs to the TrpC family.

It catalyses the reaction 1-(2-carboxyphenylamino)-1-deoxy-D-ribulose 5-phosphate + H(+) = (1S,2R)-1-C-(indol-3-yl)glycerol 3-phosphate + CO2 + H2O. It functions in the pathway amino-acid biosynthesis; L-tryptophan biosynthesis; L-tryptophan from chorismate: step 4/5. The sequence is that of Indole-3-glycerol phosphate synthase from Beutenbergia cavernae (strain ATCC BAA-8 / DSM 12333 / CCUG 43141 / JCM 11478 / NBRC 16432 / NCIMB 13614 / HKI 0122).